We begin with the raw amino-acid sequence, 319 residues long: GTP 3',8-cyclase (319 aa).

The 224-residue stretch at 4–227 (KHGRKINYLR…VETEKSSTAL (224 aa)) folds into the Radical SAM core domain. A GTP-binding site is contributed by Arg-13. Cys-20 and Cys-24 together coordinate [4Fe-4S] cluster. Position 26 (Tyr-26) interacts with S-adenosyl-L-methionine. Cys-27 is a binding site for [4Fe-4S] cluster. Arg-63 lines the GTP pocket. Gly-67 contacts S-adenosyl-L-methionine. Thr-94 serves as a coordination point for GTP. S-adenosyl-L-methionine is bound at residue Ser-118. Lys-155 lines the GTP pocket. Met-189 provides a ligand contact to S-adenosyl-L-methionine. Residues Cys-249 and Cys-252 each coordinate [4Fe-4S] cluster. 254-256 (RVR) is a GTP binding site. Position 266 (Cys-266) interacts with [4Fe-4S] cluster.

Belongs to the radical SAM superfamily. MoaA family. Monomer and homodimer. The cofactor is [4Fe-4S] cluster.

It carries out the reaction GTP + AH2 + S-adenosyl-L-methionine = (8S)-3',8-cyclo-7,8-dihydroguanosine 5'-triphosphate + 5'-deoxyadenosine + L-methionine + A + H(+). It participates in cofactor biosynthesis; molybdopterin biosynthesis. In terms of biological role, catalyzes the cyclization of GTP to (8S)-3',8-cyclo-7,8-dihydroguanosine 5'-triphosphate. The protein is GTP 3',8-cyclase of Clostridium botulinum (strain ATCC 19397 / Type A).